Consider the following 232-residue polypeptide: Flagellar L-ring protein (232 aa).

The N-terminal stretch at 1–15 is a signal peptide; that stretch reads MKKVLFYVLPFAFFG. A lipid anchor (N-palmitoyl cysteine) is attached at C16. A lipid anchor (S-diacylglycerol cysteine) is attached at C16.

This sequence belongs to the FlgH family. The basal body constitutes a major portion of the flagellar organelle and consists of four rings (L,P,S, and M) mounted on a central rod.

The protein localises to the cell outer membrane. Its subcellular location is the bacterial flagellum basal body. Functionally, assembles around the rod to form the L-ring and probably protects the motor/basal body from shearing forces during rotation. This is Flagellar L-ring protein from Campylobacter jejuni subsp. doylei (strain ATCC BAA-1458 / RM4099 / 269.97).